A 182-amino-acid chain; its full sequence is uncharacterized protein (182 aa).

A run of 4 helical transmembrane segments spans residues 19–39 (LFGIIPIKFIVSFLQLVSIVS), 51–71 (IYLVLLSVGIVLNVFTVVVFI), 87–107 (IFTVVPFIYAVYTFISFIELF), and 118–138 (CSPFAYAFIFLCIYIFYLAMC).

Its subcellular location is the membrane. This is an uncharacterized protein from Caenorhabditis elegans.